A 422-amino-acid chain; its full sequence is Serine/threonine-protein kinase H1 homolog (422 aa).

The segment at 35–80 (FIKYDGGGEKTGSPSPQGQSQAVAKVSQSPPPANDQPEPADSHRKK) is disordered. Polar residues predominate over residues 46 to 62 (GSPSPQGQSQAVAKVSQ). Residues 96 to 353 (YDIKALIGRG…AGQALKHPWI (258 aa)) enclose the Protein kinase domain. ATP is bound by residues 102 to 110 (IGRGSFSRV) and lysine 125. The active-site Proton acceptor is aspartate 216. Residues 376-422 (RASSRCHSTKSSQSTRSSRSTKSSKARRLREKELRELNRRYQQQCNG) are disordered. The span at 384-396 (TKSSQSTRSSRST) shows a compositional bias: low complexity. The segment covering 405–414 (REKELRELNR) has biased composition (basic and acidic residues).

It belongs to the protein kinase superfamily. CAMK Ser/Thr protein kinase family.

The enzyme catalyses L-seryl-[protein] + ATP = O-phospho-L-seryl-[protein] + ADP + H(+). It catalyses the reaction L-threonyl-[protein] + ATP = O-phospho-L-threonyl-[protein] + ADP + H(+). This chain is Serine/threonine-protein kinase H1 homolog (pskh1), found in Danio rerio (Zebrafish).